Consider the following 679-residue polypeptide: DNA ligase (679 aa).

NAD(+) is bound by residues Asp36–Asp40, Ser85–Leu86, and Glu116. The active-site N6-AMP-lysine intermediate is Lys118. The NAD(+) site is built by Arg139, Glu174, Lys300, and Lys324. Zn(2+) contacts are provided by Cys418, Cys421, Cys436, and Cys441. Residues Glu600 to Lys679 enclose the BRCT domain.

Belongs to the NAD-dependent DNA ligase family. LigA subfamily. Requires Mg(2+) as cofactor. It depends on Mn(2+) as a cofactor.

The enzyme catalyses NAD(+) + (deoxyribonucleotide)n-3'-hydroxyl + 5'-phospho-(deoxyribonucleotide)m = (deoxyribonucleotide)n+m + AMP + beta-nicotinamide D-nucleotide.. Functionally, DNA ligase that catalyzes the formation of phosphodiester linkages between 5'-phosphoryl and 3'-hydroxyl groups in double-stranded DNA using NAD as a coenzyme and as the energy source for the reaction. It is essential for DNA replication and repair of damaged DNA. The sequence is that of DNA ligase from Pelotomaculum thermopropionicum (strain DSM 13744 / JCM 10971 / SI).